The following is a 90-amino-acid chain: MNADGPVVNVHVLFFAKSRELANTPRSKVDLPTEITASDLLELLVSKFGLTPIRDNLILAHNESYIDNLSERILFKEGDELAIIPPLSGG.

1-thioglycine; alternate is present on glycine 90. Residue glycine 90 is modified to Glycyl adenylate; alternate.

It belongs to the MoaD family. MOCS2A subfamily. As to quaternary structure, heterotetramer; composed of 2 small (Mocs2A) and 2 large (Mocs2B) subunits. C-terminal thiocarboxylation occurs in 2 steps, it is first acyl-adenylated (-COAMP) via the hesA/moeB/thiF part of MOCS3, then thiocarboxylated (-COSH) via the rhodanese domain of MOCS3.

Its subcellular location is the cytoplasm. It participates in cofactor biosynthesis; molybdopterin biosynthesis. Functionally, acts as a sulfur carrier required for molybdopterin biosynthesis. Component of the molybdopterin synthase complex that catalyzes the conversion of precursor Z into molybdopterin by mediating the incorporation of 2 sulfur atoms into precursor Z to generate a dithiolene group. In the complex, serves as sulfur donor by being thiocarboxylated (-COSH) at its C-terminus by MOCS3. After interaction with Mocs2B, the sulfur is then transferred to precursor Z to form molybdopterin. This chain is Molybdopterin synthase sulfur carrier subunit, found in Drosophila yakuba (Fruit fly).